We begin with the raw amino-acid sequence, 645 residues long: Threonine--tRNA ligase (645 aa).

A TGS domain is found at 1–61 (MIKITLPDGS…TSDSTVQLLT (61 aa)). The segment at 242-541 (DHRKLGKELE…LIEHVAGNFP (300 aa)) is catalytic. Positions 337, 388, and 518 each coordinate Zn(2+).

Belongs to the class-II aminoacyl-tRNA synthetase family. Homodimer. The cofactor is Zn(2+).

It is found in the cytoplasm. The catalysed reaction is tRNA(Thr) + L-threonine + ATP = L-threonyl-tRNA(Thr) + AMP + diphosphate + H(+). In terms of biological role, catalyzes the attachment of threonine to tRNA(Thr) in a two-step reaction: L-threonine is first activated by ATP to form Thr-AMP and then transferred to the acceptor end of tRNA(Thr). Also edits incorrectly charged L-seryl-tRNA(Thr). This is Threonine--tRNA ligase from Cytophaga hutchinsonii (strain ATCC 33406 / DSM 1761 / CIP 103989 / NBRC 15051 / NCIMB 9469 / D465).